Reading from the N-terminus, the 412-residue chain is Multifunctional CCA protein (412 aa).

ATP is bound by residues Gly8 and Arg11. 2 residues coordinate CTP: Gly8 and Arg11. 2 residues coordinate Mg(2+): Asp21 and Asp23. ATP-binding residues include Arg91, Arg137, and Arg140. CTP-binding residues include Arg91, Arg137, and Arg140. The region spanning 228-329 (TGIHTLMTLS…VKLFDSIDAW (102 aa)) is the HD domain.

This sequence belongs to the tRNA nucleotidyltransferase/poly(A) polymerase family. Bacterial CCA-adding enzyme type 1 subfamily. Monomer. Can also form homodimers and oligomers. Requires Mg(2+) as cofactor. The cofactor is Ni(2+).

The enzyme catalyses a tRNA precursor + 2 CTP + ATP = a tRNA with a 3' CCA end + 3 diphosphate. The catalysed reaction is a tRNA with a 3' CCA end + 2 CTP + ATP = a tRNA with a 3' CCACCA end + 3 diphosphate. In terms of biological role, catalyzes the addition and repair of the essential 3'-terminal CCA sequence in tRNAs without using a nucleic acid template. Adds these three nucleotides in the order of C, C, and A to the tRNA nucleotide-73, using CTP and ATP as substrates and producing inorganic pyrophosphate. tRNA 3'-terminal CCA addition is required both for tRNA processing and repair. Also involved in tRNA surveillance by mediating tandem CCA addition to generate a CCACCA at the 3' terminus of unstable tRNAs. While stable tRNAs receive only 3'-terminal CCA, unstable tRNAs are marked with CCACCA and rapidly degraded. The chain is Multifunctional CCA protein from Escherichia coli (strain SE11).